The chain runs to 247 residues: Germin-like protein 9-1 (247 aa).

An N-terminal signal peptide occupies residues M1–A25. The Cupin type-1 domain occupies K53–D201. H100, H102, and E107 together coordinate Mn(2+). N126 carries an N-linked (GlcNAc...) asparagine glycan. H148 provides a ligand contact to Mn(2+). N-linked (GlcNAc...) asparagine glycosylation occurs at N153.

Belongs to the germin family. As to quaternary structure, oligomer (believed to be a pentamer but probably hexamer).

Its subcellular location is the secreted. The protein resides in the extracellular space. The protein localises to the apoplast. May play a role in plant defense. Probably has no oxalate oxidase activity even if the active site is conserved. The sequence is that of Germin-like protein 9-1 from Oryza sativa subsp. japonica (Rice).